We begin with the raw amino-acid sequence, 169 residues long: Ribosome maturation factor RimM (169 aa).

A PRC barrel domain is found at 94–168; sequence DDEFYHADLI…RIVADPPEGL (75 aa).

This sequence belongs to the RimM family. As to quaternary structure, binds ribosomal protein uS19.

The protein resides in the cytoplasm. In terms of biological role, an accessory protein needed during the final step in the assembly of 30S ribosomal subunit, possibly for assembly of the head region. Essential for efficient processing of 16S rRNA. May be needed both before and after RbfA during the maturation of 16S rRNA. It has affinity for free ribosomal 30S subunits but not for 70S ribosomes. The chain is Ribosome maturation factor RimM from Cereibacter sphaeroides (strain ATCC 17025 / ATH 2.4.3) (Rhodobacter sphaeroides).